The primary structure comprises 99 residues: Integration host factor subunit alpha (99 aa).

The segment at 49-75 (FGNFDLRDKNQRPGRNPKTGEDIPITA) is disordered.

It belongs to the bacterial histone-like protein family. Heterodimer of an alpha and a beta chain.

Its function is as follows. This protein is one of the two subunits of integration host factor, a specific DNA-binding protein that functions in genetic recombination as well as in transcriptional and translational control. This is Integration host factor subunit alpha from Salmonella agona (strain SL483).